The sequence spans 435 residues: Ribosomal protein uS12 methylthiotransferase RimO (435 aa).

The 113-residue stretch at 3–115 folds into the MTTase N-terminal domain; the sequence is KKLHVVSLGC…IDELISQKKS (113 aa). Positions 12, 46, 78, 146, 150, and 153 each coordinate [4Fe-4S] cluster. One can recognise a Radical SAM core domain in the interval 132 to 361; the sequence is TGSNYHAYIK…DAIVKKQQMK (230 aa).

The protein belongs to the methylthiotransferase family. RimO subfamily. Requires [4Fe-4S] cluster as cofactor.

Its subcellular location is the cytoplasm. The catalysed reaction is L-aspartate(89)-[ribosomal protein uS12]-hydrogen + (sulfur carrier)-SH + AH2 + 2 S-adenosyl-L-methionine = 3-methylsulfanyl-L-aspartate(89)-[ribosomal protein uS12]-hydrogen + (sulfur carrier)-H + 5'-deoxyadenosine + L-methionine + A + S-adenosyl-L-homocysteine + 2 H(+). Functionally, catalyzes the methylthiolation of an aspartic acid residue of ribosomal protein uS12. This chain is Ribosomal protein uS12 methylthiotransferase RimO, found in Nitratiruptor sp. (strain SB155-2).